The following is a 193-amino-acid chain: Hypoxanthine/guanine phosphoribosyltransferase (193 aa).

It belongs to the purine/pyrimidine phosphoribosyltransferase family. Archaeal HPRT subfamily. As to quaternary structure, homodimer.

It is found in the cytoplasm. The enzyme catalyses IMP + diphosphate = hypoxanthine + 5-phospho-alpha-D-ribose 1-diphosphate. The catalysed reaction is GMP + diphosphate = guanine + 5-phospho-alpha-D-ribose 1-diphosphate. Its pathway is purine metabolism; IMP biosynthesis via salvage pathway; IMP from hypoxanthine: step 1/1. Functionally, catalyzes a salvage reaction resulting in the formation of IMP that is energically less costly than de novo synthesis. Prefers hypoxanthine, has 66% activity with guanine while activity with adenine, xanthine, uracil, orotate, or cytosine is negligible. This is Hypoxanthine/guanine phosphoribosyltransferase from Methanothermobacter marburgensis (strain ATCC BAA-927 / DSM 2133 / JCM 14651 / NBRC 100331 / OCM 82 / Marburg) (Methanobacterium thermoautotrophicum).